Consider the following 122-residue polypeptide: Large ribosomal subunit protein uL29B (122 aa).

Positions 10–69 (QLGIKQIEERAAEIKAELAALRQKKNSGDVGANDIKTAKKNLARALTVRREKILEELVEA) form a coiled coil.

This sequence belongs to the universal ribosomal protein uL29 family. As to quaternary structure, component of the large ribosomal subunit.

The protein resides in the cytoplasm. The chain is Large ribosomal subunit protein uL29B (RPL35C) from Encephalitozoon cuniculi (strain GB-M1) (Microsporidian parasite).